Here is a 374-residue protein sequence, read N- to C-terminus: uncharacterized protein (374 aa).

Positions 1-26 are cleaved as a signal peptide; it reads MNNLIKAYAAGVMSAAFLFGSEGRVR.

This is an uncharacterized protein from Treponema pallidum (strain Nichols).